A 480-amino-acid chain; its full sequence is tRNA-2-methylthio-N(6)-dimethylallyladenosine synthase (480 aa).

The MTTase N-terminal domain maps to 2-118 (NRVHIKTYGC…VPGYLDNLRA (117 aa)). Residues C11, C47, and C81 each contribute to the [4Fe-4S] cluster site. The segment at 145-169 (DHLLPQDSDSDSQPSTLNSQLRGAA) is disordered. The span at 149-159 (PQDSDSDSQPS) shows a compositional bias: low complexity. A Radical SAM core domain is found at 171 to 405 (PPPQITAFVS…LELLRQNSER (235 aa)). [4Fe-4S] cluster contacts are provided by C185, C189, and C192. The region spanning 408–470 (ALLLDTVEEV…VSTLYGELML (63 aa)) is the TRAM domain.

It belongs to the methylthiotransferase family. MiaB subfamily. In terms of assembly, monomer. Requires [4Fe-4S] cluster as cofactor.

Its subcellular location is the cytoplasm. The enzyme catalyses N(6)-dimethylallyladenosine(37) in tRNA + (sulfur carrier)-SH + AH2 + 2 S-adenosyl-L-methionine = 2-methylsulfanyl-N(6)-dimethylallyladenosine(37) in tRNA + (sulfur carrier)-H + 5'-deoxyadenosine + L-methionine + A + S-adenosyl-L-homocysteine + 2 H(+). Catalyzes the methylthiolation of N6-(dimethylallyl)adenosine (i(6)A), leading to the formation of 2-methylthio-N6-(dimethylallyl)adenosine (ms(2)i(6)A) at position 37 in tRNAs that read codons beginning with uridine. This chain is tRNA-2-methylthio-N(6)-dimethylallyladenosine synthase, found in Opitutus terrae (strain DSM 11246 / JCM 15787 / PB90-1).